Reading from the N-terminus, the 419-residue chain is Transcription termination factor Rho (419 aa).

One can recognise a Rho RNA-BD domain in the interval 48–123 (EISGDGVLEI…LKVDSINFDR (76 aa)). 3 RNA-binding regions span residues 61-66 (GFGFLR), 78-80 (DIY), and 108-110 (ERY). ATP contacts are provided by residues 169-174 (GKGQRG), 181-186 (KAGKTI), and arginine 212. Residues 284 to 288 (VLTGG) form an RNA-binding 2 region.

Belongs to the Rho family. Homohexamer. The homohexamer assembles into an open ring structure.

Facilitates transcription termination by a mechanism that involves Rho binding to the nascent RNA, activation of Rho's RNA-dependent ATPase activity, and release of the mRNA from the DNA template. This chain is Transcription termination factor Rho, found in Pseudomonas aeruginosa (strain ATCC 15692 / DSM 22644 / CIP 104116 / JCM 14847 / LMG 12228 / 1C / PRS 101 / PAO1).